The following is a 443-amino-acid chain: D-inositol 3-phosphate glycosyltransferase (443 aa).

His30 is a binding site for 1D-myo-inositol 3-phosphate. UDP-N-acetyl-alpha-D-glucosamine contacts are provided by residues Gln36–Pro37 and Gly44. Residues Asp41–Asn46, Lys99, Tyr132, Thr156, and Arg176 contribute to the 1D-myo-inositol 3-phosphate site. The UDP-N-acetyl-alpha-D-glucosamine site is built by Arg250, Lys255, and Arg316. Residues Phe325, Arg326, and Cys328 each coordinate Mg(2+). UDP-N-acetyl-alpha-D-glucosamine is bound by residues Glu338 and Glu346. Position 352 (Thr352) interacts with Mg(2+).

It belongs to the glycosyltransferase group 1 family. MshA subfamily. In terms of assembly, homodimer.

It catalyses the reaction 1D-myo-inositol 3-phosphate + UDP-N-acetyl-alpha-D-glucosamine = 1D-myo-inositol 2-acetamido-2-deoxy-alpha-D-glucopyranoside 3-phosphate + UDP + H(+). Functionally, catalyzes the transfer of a N-acetyl-glucosamine moiety to 1D-myo-inositol 3-phosphate to produce 1D-myo-inositol 2-acetamido-2-deoxy-glucopyranoside 3-phosphate in the mycothiol biosynthesis pathway. In Stackebrandtia nassauensis (strain DSM 44728 / CIP 108903 / NRRL B-16338 / NBRC 102104 / LLR-40K-21), this protein is D-inositol 3-phosphate glycosyltransferase.